Here is a 247-residue protein sequence, read N- to C-terminus: Carboxy-S-adenosyl-L-methionine synthase (247 aa).

S-adenosyl-L-methionine contacts are provided by residues Y39, 64 to 66 (GCS), 89 to 90 (DN), 117 to 118 (DI), N132, and R199.

Belongs to the class I-like SAM-binding methyltransferase superfamily. Cx-SAM synthase family. In terms of assembly, homodimer.

It carries out the reaction prephenate + S-adenosyl-L-methionine = carboxy-S-adenosyl-L-methionine + 3-phenylpyruvate + H2O. Functionally, catalyzes the conversion of S-adenosyl-L-methionine (SAM) to carboxy-S-adenosyl-L-methionine (Cx-SAM). The polypeptide is Carboxy-S-adenosyl-L-methionine synthase (Pectobacterium atrosepticum (strain SCRI 1043 / ATCC BAA-672) (Erwinia carotovora subsp. atroseptica)).